Consider the following 298-residue polypeptide: MIPITTPVGNFKVWTKRFGTNPKIKVLLLHGGPAMTHEYMECFETFFQREGFEFYEYDQLGSYYSDQPTDEKLWNIDRFVDEVEQVRKAIHADKENFYVLGNSWGGILAMEYALKYQQNLKGLIVANMMASAPEYVKYAEVLSKQMKPEVLAEVRAIEAKKDYANPRYTELLFPNYYAQHICRLKEWPDALNRSLKHVNSTVYTLMQGPSELGMSSDARLAKWDIKNRLHEIATPTLMIGARYDTMDPKAMEEQSKLVQKGRYLYCPNGSHLAMWDDQKVFMDGVIKFIKDVDTKSFN.

The AB hydrolase-1 domain occupies 26–277 (VLLLHGGPAM…NGSHLAMWDD (252 aa)). Catalysis depends on Ser103, which acts as the Nucleophile. The active site involves Asp244. His271 (proton donor) is an active-site residue.

The protein belongs to the peptidase S33 family. Monomer.

The enzyme catalyses Release of N-terminal proline from a peptide.. Functionally, releases the N-terminal proline from various substrates. Cleaves specifically Pro-betaNA and small peptides containing proline at the amino terminal. No activity against hydroxyproline-betaNA. The chain is Proline iminopeptidase (fpaP) from Elizabethkingia meningoseptica (Chryseobacterium meningosepticum).